The sequence spans 981 residues: Anoctamin-3 (981 aa).

Polar residues predominate over residues Met1–Ser22. Residues Met1–Ser33 are disordered. Residues Met1 to Thr403 lie on the Cytoplasmic side of the membrane. The helical transmembrane segment at Gly404–Met424 threads the bilayer. 3 N-linked (GlcNAc...) asparagine glycosylation sites follow: Asn425, Asn448, and Asn455. The Extracellular portion of the chain corresponds to Asn425 to Asn469. The chain crosses the membrane as a helical span at residues Gly470–Trp490. Residues Lys491–Ser550 lie on the Cytoplasmic side of the membrane. The helical transmembrane segment at Val551–Tyr571 threads the bilayer. At Arg572–Gln592 the chain is on the extracellular side. The helical transmembrane segment at Phe593–Ala613 threads the bilayer. The Cytoplasmic segment spans residues Tyr614–Lys640. The chain crosses the membrane as a helical span at residues Met641 to Gly661. The Extracellular portion of the chain corresponds to Arg662–Gln761. The helical transmembrane segment at Phe762–Asn782 threads the bilayer. Residues Asn783–Gly810 are Cytoplasmic-facing. The helical transmembrane segment at Ile811–Ile831 threads the bilayer. Topologically, residues Ala832 to Leu914 are extracellular. N-linked (GlcNAc...) asparagine glycosylation is present at Asn866. The chain crosses the membrane as a helical span at residues Ala915–Ile935. Residues Pro936–Pro981 are Cytoplasmic-facing.

It belongs to the anoctamin family. Interacts with KCNT1/Slack. As to expression, highly expressed in the forebrain striatum.

The protein resides in the cell membrane. It catalyses the reaction a 1,2-diacyl-sn-glycero-3-phosphocholine(in) = a 1,2-diacyl-sn-glycero-3-phosphocholine(out). It carries out the reaction a beta-D-galactosyl-(1&lt;-&gt;1')-N-acylsphing-4-enine(out) = a beta-D-galactosyl-(1&lt;-&gt;1')-N-acylsphing-4-enine(in). Has calcium-dependent phospholipid scramblase activity; scrambles phosphatidylcholine and galactosylceramide. Seems to act as potassium channel regulator and may inhibit pain signaling; can facilitate KCNT1/Slack channel activity by promoting its full single-channel conductance at very low sodium concentrations and by increasing its sodium sensitivity. Does not exhibit calcium-activated chloride channel (CaCC) activity. The sequence is that of Anoctamin-3 (ANO3) from Homo sapiens (Human).